The following is a 184-amino-acid chain: Protein GrpE (184 aa).

Polar residues predominate over residues 1-26 (MANEQNEQAQDIQNEQVEQSNEQTQA). Residues 1–34 (MANEQNEQAQDIQNEQVEQSNEQTQAEGVEQAND) are disordered.

The protein belongs to the GrpE family. Homodimer.

It is found in the cytoplasm. Its function is as follows. Participates actively in the response to hyperosmotic and heat shock by preventing the aggregation of stress-denatured proteins, in association with DnaK and GrpE. It is the nucleotide exchange factor for DnaK and may function as a thermosensor. Unfolded proteins bind initially to DnaJ; upon interaction with the DnaJ-bound protein, DnaK hydrolyzes its bound ATP, resulting in the formation of a stable complex. GrpE releases ADP from DnaK; ATP binding to DnaK triggers the release of the substrate protein, thus completing the reaction cycle. Several rounds of ATP-dependent interactions between DnaJ, DnaK and GrpE are required for fully efficient folding. The polypeptide is Protein GrpE (Acinetobacter baumannii (strain AB307-0294)).